The primary structure comprises 230 residues: Demethylmenaquinone methyltransferase (230 aa).

Residues threonine 57, aspartate 77, 101 to 102, and serine 118 contribute to the S-adenosyl-L-methionine site; that span reads DI.

It belongs to the class I-like SAM-binding methyltransferase superfamily. MenG/UbiE family.

The catalysed reaction is a 2-demethylmenaquinol + S-adenosyl-L-methionine = a menaquinol + S-adenosyl-L-homocysteine + H(+). It functions in the pathway quinol/quinone metabolism; menaquinone biosynthesis; menaquinol from 1,4-dihydroxy-2-naphthoate: step 2/2. Its function is as follows. Methyltransferase required for the conversion of demethylmenaquinol (DMKH2) to menaquinol (MKH2). This chain is Demethylmenaquinone methyltransferase, found in Chlamydia caviae (strain ATCC VR-813 / DSM 19441 / 03DC25 / GPIC) (Chlamydophila caviae).